Consider the following 127-residue polypeptide: Protein ApaG (127 aa).

Positions 3-127 (DDPRYRVEVE…FVLSVPRTLH (125 aa)) constitute an ApaG domain.

This is Protein ApaG from Xanthomonas campestris pv. campestris (strain 8004).